The following is an 872-amino-acid chain: MSSALQTPMMRQYLEIKAQHPESILFFRMGDFYEMFLDDALVASRILDITLTSRNKNSADEIPFCGVPFHSAQPYIARLVEAGYRVAVCEQIEDPKQTKGLVKRDVVKVVTPALVTESESLTPDENSFLLALCSSGQRWGCAWLDLSTGEFLTANSDNLAGAATLLASIAPRELLLPDQLRRDLPPELALVAGDRPRAAVADWVLDKDYCSKLICSQFGVASPEMLGLAVTELSEALLATGMVLHYLQENRHATLPHLRDLTIVRQNDHLALDPATRRNLELTATMTDNKKSGSLLGCLDRTATAMGARTLKQWLSYPLVQVAPIRRRLEAVEELKENPALQDQLREQLKGVHDLERLNGRVSMAGAGGRDLRSLHDSLEQVPQIRLALTEATAPLLRDLTEELDPLQDIRSLINQAIAPAPPFSLREGGIIADGYHAELDELRAISREGKGYIARMEAQERDRTGISSLKIRYNKVFGYYIEVTKSNLSSVPDNYIRRQTIATGERYITEELKSYEEKVLGAEDRICELEYTLFQEVRERTAAQGGRVSRTASALASLDVLASLALVAQERDYCKPVVDDGDTLEIIEGRHPVVEAMNLGERFVPNDTRLDQEQHQLLMITGPNMAGKSTYMRQVALITLMAQVGSFVPASRATIGIADQIFTRVGAGDNLARGQSTFMVEMMETAHILRSATTKSLVVLDEIGRGTSTFDGLSIAWAVAEYLHDTNHCKARTLFATHYHELADLAATREGITNLTVAVKEWNDQVIFLRTIIPGAASHSYGIQVARLAGMPRNVIERAKEVLKTLEEGEFEQGSPRLSKSSIAPPRKETAQFTLFEQQGDLLRERLKKLNISVMTPLEALNLLDELKKMA.

623–630 contributes to the ATP binding site; sequence GPNMAGKS.

It belongs to the DNA mismatch repair MutS family.

Its function is as follows. This protein is involved in the repair of mismatches in DNA. It is possible that it carries out the mismatch recognition step. This protein has a weak ATPase activity. The sequence is that of DNA mismatch repair protein MutS from Trichlorobacter lovleyi (strain ATCC BAA-1151 / DSM 17278 / SZ) (Geobacter lovleyi).